Consider the following 442-residue polypeptide: D-serine dehydratase (442 aa).

At lysine 118 the chain carries N6-(pyridoxal phosphate)lysine.

Belongs to the serine/threonine dehydratase family. DsdA subfamily. Monomer. Pyridoxal 5'-phosphate serves as cofactor.

It catalyses the reaction D-serine = pyruvate + NH4(+). In Escherichia fergusonii (strain ATCC 35469 / DSM 13698 / CCUG 18766 / IAM 14443 / JCM 21226 / LMG 7866 / NBRC 102419 / NCTC 12128 / CDC 0568-73), this protein is D-serine dehydratase.